The primary structure comprises 312 residues: Methionyl-tRNA formyltransferase (312 aa).

110-113 (SLLP) contributes to the (6S)-5,6,7,8-tetrahydrofolate binding site.

This sequence belongs to the Fmt family.

It carries out the reaction L-methionyl-tRNA(fMet) + (6R)-10-formyltetrahydrofolate = N-formyl-L-methionyl-tRNA(fMet) + (6S)-5,6,7,8-tetrahydrofolate + H(+). Functionally, attaches a formyl group to the free amino group of methionyl-tRNA(fMet). The formyl group appears to play a dual role in the initiator identity of N-formylmethionyl-tRNA by promoting its recognition by IF2 and preventing the misappropriation of this tRNA by the elongation apparatus. This is Methionyl-tRNA formyltransferase from Mycobacterium ulcerans (strain Agy99).